A 208-amino-acid polypeptide reads, in one-letter code: NAD(P)H-hydrate epimerase (208 aa).

The 199-residue stretch at 10 to 208 folds into the YjeF N-terminal domain; sequence IRDAERQTLA…TLGVIMTPAN (199 aa). 54–58 serves as a coordination point for (6S)-NADPHX; the sequence is NNGGD. Asparagine 55 and aspartate 117 together coordinate K(+). Residues 121-127 and aspartate 150 each bind (6S)-NADPHX; that span reads GIGLNRP. Residue serine 153 participates in K(+) binding.

Belongs to the NnrE/AIBP family. It depends on K(+) as a cofactor.

It catalyses the reaction (6R)-NADHX = (6S)-NADHX. The catalysed reaction is (6R)-NADPHX = (6S)-NADPHX. In terms of biological role, catalyzes the epimerization of the S- and R-forms of NAD(P)HX, a damaged form of NAD(P)H that is a result of enzymatic or heat-dependent hydration. This is a prerequisite for the S-specific NAD(P)H-hydrate dehydratase to allow the repair of both epimers of NAD(P)HX. The chain is NAD(P)H-hydrate epimerase from Achromobacter xylosoxidans (strain A8).